We begin with the raw amino-acid sequence, 1649 residues long: eIF-2-alpha kinase GCN2 (1649 aa).

Disordered stretches follow at residues 1-25, 138-158, and 227-256; these read MAGG…RQDH, NKPP…QEEQ, and HGGS…YSVC. Residues 25-137 enclose the RWD domain; sequence HELQALEAIY…YHVQSFLSEH (113 aa). A coiled-coil region spans residues 146–205; that stretch reads HEEMLERRAQEEQQRLLEAKRKEEQEQREILHEIQRRKEEIKEEKKRKEMAKQERLEIAS. Phosphoserine is present on serine 230. The segment covering 237–249 has biased composition (basic residues); the sequence is GKHRANSSGRSRR. Protein kinase domains follow at residues 296–539 and 590–1001; these read VYNA…HSFI and FEEL…SELL. Residues 596–604 and lysine 619 contribute to the ATP site; that span reads LGKGAFGAV. Disordered stretches follow at residues 660 to 750 and 766 to 788; these read ERPA…QSFL and ENSK…ESEP. The residue at position 667 (threonine 667) is a Phosphothreonine. Polar residues predominate over residues 705–717; the sequence is LSSSVEWSTSGER. Acidic residues predominate over residues 731–740; the sequence is SDDEDDDEDE. Residues 778 to 787 show a composition bias toward basic and acidic residues; sequence NEKNGCHESE. Catalysis depends on aspartate 848, which acts as the Proton acceptor. Threonine 871 carries the phosphothreonine modification. 2 positions are modified to phosphothreonine; by autocatalysis: threonine 899 and threonine 904. Residues 1022 to 1493 form a histidyl-tRNA synthetase-like region; it reads VDGKAYRTMM…DHVLQKLRTK (472 aa). Lysine 1259 is subject to N6-acetyllysine.

This sequence belongs to the protein kinase superfamily. Ser/Thr protein kinase family. GCN2 subfamily. As to quaternary structure, homodimer; homodimerization is important for kinase activation by uncharged tRNAs. Interacts with GCN1; this interaction stimulates EIF2AK4/GCN2 kinase activity and is impaired by IMPACT upon a variety of stress conditions, such as amino acid depletion, UV-C irradiation, proteasome inhibitor treatment and glucose deprivation. Interacts with DNAJC3; this interaction inhibits EIF2AK4/GCN2 kinase activity during endoplasmic reticulum (ER), hypothermic and amino acid-starving stress conditions. Interacts with MAP3K20; activates EIF2AK4/GCN2 kinase activity in response to moderate ribotoxic stress. (Microbial infection) Interacts with hepatitis E virus (HEV) ORF1 protease; this interaction inhibits dimerization of EIF2AK4 and prevents EIF2AK4-mediated phosphorylation of EIF2A. Autophosphorylated; autophosphorylation on Thr-899 is increased upon amino acid starvation and in UV irradiation cells and inhibited in presence of IMPACT. Widely expressed. Expressed in lung, smooth muscle cells and macrophages.

The protein resides in the cytoplasm. The enzyme catalyses L-seryl-[protein] + ATP = O-phospho-L-seryl-[protein] + ADP + H(+). It carries out the reaction L-threonyl-[protein] + ATP = O-phospho-L-threonyl-[protein] + ADP + H(+). Its function is as follows. Metabolic-stress sensing protein kinase that phosphorylates the alpha subunit of eukaryotic translation initiation factor 2 (EIF2S1/eIF-2-alpha) in response to low amino acid availability. Plays a role as an activator of the integrated stress response (ISR) required for adaptation to amino acid starvation. EIF2S1/eIF-2-alpha phosphorylation in response to stress converts EIF2S1/eIF-2-alpha into a global protein synthesis inhibitor, leading to a global attenuation of cap-dependent translation, and thus to a reduced overall utilization of amino acids, while concomitantly initiating the preferential translation of ISR-specific mRNAs, such as the transcriptional activator ATF4, and hence allowing ATF4-mediated reprogramming of amino acid biosynthetic gene expression to alleviate nutrient depletion. Binds uncharged tRNAs. Required for the translational induction of protein kinase PRKCH following amino acid starvation. Involved in cell cycle arrest by promoting cyclin D1 mRNA translation repression after the unfolded protein response pathway (UPR) activation or cell cycle inhibitor CDKN1A/p21 mRNA translation activation in response to amino acid deprivation. Plays a role in the consolidation of synaptic plasticity, learning as well as formation of long-term memory. Plays a role in neurite outgrowth inhibition. Plays a proapoptotic role in response to glucose deprivation. Promotes global cellular protein synthesis repression in response to UV irradiation independently of the stress-activated protein kinase/c-Jun N-terminal kinase (SAPK/JNK) and p38 MAPK signaling pathways. Plays a role in the antiviral response against alphavirus infection; impairs early viral mRNA translation of the incoming genomic virus RNA, thus preventing alphavirus replication. (Microbial infection) Plays a role in modulating the adaptive immune response to yellow fever virus infection; promotes dendritic cells to initiate autophagy and antigene presentation to both CD4(+) and CD8(+) T-cells under amino acid starvation. The protein is eIF-2-alpha kinase GCN2 of Homo sapiens (Human).